The chain runs to 289 residues: Iodotyrosine deiodinase 1 (289 aa).

The chain crosses the membrane as a helical span at residues 1-21; that stretch reads MYFLTPILVAILCILVVWIFK. Positions 29–58 are enriched in basic and acidic residues; it reads KKKGEPRTRAEARPWVDEDLKDSSDLHQAE. Positions 29-69 are disordered; that stretch reads KKKGEPRTRAEARPWVDEDLKDSSDLHQAEEDADEWQESEE. Residues 59 to 69 are compositionally biased toward acidic residues; it reads EDADEWQESEE. FMN is bound by residues 100–104, S128, and 128–129; these read RRSVR and SG. 3-iodo-L-tyrosine contacts are provided by A130, E157, Y161, and K182. FMN is bound by residues 237 to 239 and R279; that span reads TTT.

The protein belongs to the nitroreductase family. In terms of assembly, homodimer. The cofactor is FMN. As to expression, expressed at a high level in thyroid gland (at protein level). Expressed at a high level in thyroid gland and at lower level in kidney and trachea.

It is found in the cell membrane. It localises to the cytoplasmic vesicle membrane. It carries out the reaction 2 iodide + L-tyrosine + 2 NADP(+) = 3,5-diiodo-L-tyrosine + 2 NADPH + H(+). The enzyme catalyses iodide + L-tyrosine + NADP(+) = 3-iodo-L-tyrosine + NADPH. It catalyses the reaction 3-iodo-L-tyrosine + iodide + NADP(+) = 3,5-diiodo-L-tyrosine + NADPH + H(+). The catalysed reaction is L-tyrosine + chloride + NADP(+) = 3-chloro-L-tyrosine + NADPH. It carries out the reaction bromide + L-tyrosine + NADP(+) = 3-bromo-L-tyrosine + NADPH. Its function is as follows. Catalyzes the dehalogenation of halotyrosines such as 3-bromo-L-tyrosine, 3-chloro-L-tyrosine, 3-iodo-L-tyrosine and 3,5-diiodo-L-tyrosine. During thyroid hormone biosynthesis, facilitates iodide salvage by catalysing the oxidative NADPH-dependent deiodination of the halogenated by-products of thyroid hormone production, monoiodotyrosine (L-MIT) and diiodotyrosine (L-DIT). The scavanged iodide can then reenter the hormone-producing pathways. Acts more efficiently on 3-iodo-L-tyrosine than 3,5-diiodo-L-tyrosine. The sequence is that of Iodotyrosine deiodinase 1 from Homo sapiens (Human).